We begin with the raw amino-acid sequence, 107 residues long: Phosphoribosyl-ATP pyrophosphatase (107 aa).

Belongs to the PRA-PH family.

Its subcellular location is the cytoplasm. It carries out the reaction 1-(5-phospho-beta-D-ribosyl)-ATP + H2O = 1-(5-phospho-beta-D-ribosyl)-5'-AMP + diphosphate + H(+). It participates in amino-acid biosynthesis; L-histidine biosynthesis; L-histidine from 5-phospho-alpha-D-ribose 1-diphosphate: step 2/9. This Methylobacterium nodulans (strain LMG 21967 / CNCM I-2342 / ORS 2060) protein is Phosphoribosyl-ATP pyrophosphatase.